A 474-amino-acid polypeptide reads, in one-letter code: Pleckstrin homology domain-containing family S member 1 (474 aa).

Residues glutamate 20–glutamine 135 enclose the PH domain. Disordered regions lie at residues isoleucine 232–phenylalanine 251, serine 272–lysine 321, and arginine 449–glutamate 474. A compositionally biased stretch (polar residues) spans serine 238–aspartate 248. The span at arginine 449 to proline 458 shows a compositional bias: basic and acidic residues.

The protein is Pleckstrin homology domain-containing family S member 1 of Mus musculus (Mouse).